We begin with the raw amino-acid sequence, 597 residues long: Elongation factor 4 (597 aa).

The tr-type G domain occupies 2 to 184; that stretch reads QHIRNFSIIA…AIVARVPSPE (183 aa). GTP is bound by residues 14 to 19 and 131 to 134; these read DHGKST and NKMD.

Belongs to the TRAFAC class translation factor GTPase superfamily. Classic translation factor GTPase family. LepA subfamily.

The protein resides in the cell inner membrane. It catalyses the reaction GTP + H2O = GDP + phosphate + H(+). In terms of biological role, required for accurate and efficient protein synthesis under certain stress conditions. May act as a fidelity factor of the translation reaction, by catalyzing a one-codon backward translocation of tRNAs on improperly translocated ribosomes. Back-translocation proceeds from a post-translocation (POST) complex to a pre-translocation (PRE) complex, thus giving elongation factor G a second chance to translocate the tRNAs correctly. Binds to ribosomes in a GTP-dependent manner. This chain is Elongation factor 4, found in Bordetella avium (strain 197N).